Reading from the N-terminus, the 130-residue chain is Small ribosomal subunit protein uS9 (130 aa).

The protein belongs to the universal ribosomal protein uS9 family.

This is Small ribosomal subunit protein uS9 from Vibrio atlanticus (strain LGP32) (Vibrio splendidus (strain Mel32)).